We begin with the raw amino-acid sequence, 551 residues long: Colicin E3 (551 aa).

3 disordered regions span residues 1-74 (MSGG…SGGG), 243-269 (TLSPGVTNNTDKDVRPAGFTQGGNTRD), and 293-320 (PDQVKQRQDEENRRQQEWDATHPVEAAE). Positions 1 to 315 (MSGGDGRGHN…RQQEWDATHP (315 aa)) are translocation (T) domain. The segment covering 20 to 35 (INGGPTGLGVGGGASD) has biased composition (gly residues). The Binds to TolB motif lies at 35-39 (DGSGW). The segment covering 36-45 (GSGWSSENNP) has biased composition (low complexity). Residues 46-74 (WGGGSGSGIHWGGGSGHGNGGGNGNSGGG) show a composition bias toward gly residues. Positions 296 to 320 (VKQRQDEENRRQQEWDATHPVEAAE) are enriched in basic and acidic residues. Positions 316–378 (VEAAERNYER…IAEIKQFNRF (63 aa)) form a coiled coil. Residues 316 to 450 (VEAAERNYER…SAENNLNDEK (135 aa)) form a receptor-binding (R) domain region. Positions 379-385 (AHDPMAG) match the Hairpin motif. The stretch at 386 to 450 (GHRMWQMAGL…SAENNLNDEK (65 aa)) forms a coiled coil. The segment at 406–505 (NKQAAFDAAA…KRWTGDKGRK (100 aa)) is disordered. A compositionally biased stretch (basic and acidic residues) spans 430 to 472 (ESRKKKEDKKRSAENNLNDEKNKPRKGFKDYGHDYHPAPKTEN). Residues 451–456 (NKPRKG) are linker. The tract at residues 455–551 (KGFKDYGHDY…DPKRNIKKYL (97 aa)) is ribosome inactivating activity. The segment at 457 to 551 (FKDYGHDYHP…DPKRNIKKYL (95 aa)) is cytotoxic RNase (C) domain. Catalysis depends on histidine 513, which acts as the Proton donor. Catalysis depends on glutamate 517, which acts as the Proton acceptor. Residues 517-551 (EGYRASDGQHLGSFDPKTGNQLKGPDPKRNIKKYL) form a disordered region. Residues 530–551 (FDPKTGNQLKGPDPKRNIKKYL) form a binding of immunity protein region. Arginine 545 is an active-site residue.

This sequence belongs to the cloacin colicin family. Native colicin E3 is a 1:1 complex of A chain and protein B (cognate immunity protein, Im3); protein A is 1,000-fold more active in inactivating ribosomes than the native complex. The cytotoxic fragment (residues 456-551, C95) forms a 1:1 complex with Im3. The receptor-binding (R) domain binds obliquely to its receptor BtuB without displacing BtuB's central plug; binding unfolds the R domain. The N-terminal 83 residues (T83) bind OmpF; trimeric complexes with colicin E3, BtuB and OmpF can be cross-linked and immunoprecipitated. Probably inserts into the OmpF pore as an unfolded peptide and spans the OmpF pore. In a complex with T.thermophilus 70S ribosomes, cytotoxic fragment C96 contacts 16S rRNA, 23S rRNA, mRNA, P-site tRNA and ribosomal protein uS12.

It is found in the secreted. Colicins are polypeptide toxins produced by and active against E.coli and closely related bacteria. Cleaves 16S rRNA between adenosine-1492 and guanosine-1493 (E.coli 16S rRNA numbering), releasing a 49 nucleotide (nt) 'colicin' fragment. Inactivates 70S ribosomes or 30S subunits by endonucleolytically cleaving 16S RNA at a specific site about 50 nt from its C-terminus. Produces 5'-OH-guanosine and a 2',3'-cyclic phosphate adenosine. Mixing a susceptible (e.g. strain K12 / A19) and colicin E3 producing strain results in total protein translation inhibition within 11 minutes. Its activity is inhibited by cognate immunity protein Im3. Functionally, uses BtuB, the vitamin B transporter, as a receptor on the outer membrane; binds via the receptor (R) domain. Then the translocation domain (T) probably 'fishes' for its outer membrane translocon protein, OmpF. The N-terminal 83 residues (T83) can bind to and occlude OmpF channels. A complex of the cytotoxic C-terminal 96 residues (C96) plus the immunity protein does not occlude OmpF; upon complex separation from the immunity protein C96 becomes disordered and is able to bind OmpF. The N-terminus probably binds TolB and then reinserts into an empty pore of trimeric OmpF; the rest of the protein is pulled through OmpF and crosses the inner membrane, where the cytotoxic fragment is probably released by protease FtsH. The chain is Colicin E3 (ceaC) from Escherichia coli.